The primary structure comprises 205 residues: Guanylate kinase (205 aa).

A Guanylate kinase-like domain is found at 5 to 183 (GLLIVFSGPS…AAERVKKIIE (179 aa)). An ATP-binding site is contributed by 12 to 19 (GPSGVGKG).

The protein belongs to the guanylate kinase family.

The protein resides in the cytoplasm. The catalysed reaction is GMP + ATP = GDP + ADP. Functionally, essential for recycling GMP and indirectly, cGMP. This Lactococcus lactis subsp. lactis (strain IL1403) (Streptococcus lactis) protein is Guanylate kinase (gmk).